A 316-amino-acid polypeptide reads, in one-letter code: Retinol dehydrogenase 11 (316 aa).

A helical; Signal-anchor for type II membrane protein transmembrane segment spans residues 1–21 (MFGFLLLLSLPFILYLVTPKI). Residues 22 to 316 (RKMLSSGVCT…CDLLGLPVDW (295 aa)) lie on the Cytoplasmic side of the membrane. 45–51 (GANTGIG) lines the NADP(+) pocket. At lysine 109 the chain carries N6-acetyllysine. Serine 174 lines the substrate pocket. Catalysis depends on tyrosine 199, which acts as the Proton acceptor.

This sequence belongs to the short-chain dehydrogenases/reductases (SDR) family. Post-translationally, not glycosylated. Expressed at high level in liver and testis. Expressed at lower levels in smooth muscle, thymus, submaxillary gland and epididymis. In testis, expression is restricted to pachytene spermatocytes. Also expressed in four layers of the retina, including the outer segment of rods and cones.

It localises to the endoplasmic reticulum membrane. The enzyme catalyses all-trans-retinol + NADP(+) = all-trans-retinal + NADPH + H(+). It carries out the reaction 11-cis-retinol + NADP(+) = 11-cis-retinal + NADPH + H(+). It catalyses the reaction 9-cis-retinol + NADP(+) = 9-cis-retinal + NADPH + H(+). The catalysed reaction is 13-cis-retinol + NADP(+) = 13-cis-retinal + NADPH + H(+). The enzyme catalyses a medium-chain primary fatty alcohol + NADP(+) = a medium-chain fatty aldehyde + NADPH + H(+). It carries out the reaction (2E,6Z)-nona-2,6-dien-1-ol + NADP(+) = (2E,6Z)-nona-2,6-dienal + NADPH + H(+). It catalyses the reaction (E)-oct-2-en-1-ol + NADP(+) = (2E)-octenal + NADPH + H(+). The catalysed reaction is (E)-non-2-en-1-ol + NADP(+) = (E)-non-2-enal + NADPH + H(+). The enzyme catalyses heptan-1-ol + NADP(+) = heptanal + NADPH + H(+). It carries out the reaction hexan-1-ol + NADP(+) = hexanal + NADPH + H(+). It catalyses the reaction decan-1-ol + NADP(+) = decanal + NADPH + H(+). The catalysed reaction is nonan-1-ol + NADP(+) = nonanal + NADPH + H(+). The enzyme catalyses octan-1-ol + NADP(+) = octanal + NADPH + H(+). It carries out the reaction (Z)-non-6-en-1-ol + NADP(+) = (Z)-non-6-enal + NADPH + H(+). It functions in the pathway cofactor metabolism; retinol metabolism. Its function is as follows. Retinol dehydrogenase with a clear preference for NADP. Displays high activity towards 9-cis, 11-cis and all-trans-retinol, and to a lesser extent on 13-cis-retinol. Also exhibits reductive activity towards toxic lipid peroxidation products such as medium-chain aldehydes trans-2-nonenal, nonanal, and cis-6-nonenal. Has no dehydrogenase activity towards steroid. Seems to be required for homeostasis of retinol in liver and testis. The polypeptide is Retinol dehydrogenase 11 (Rdh11) (Mus musculus (Mouse)).